The following is a 176-amino-acid chain: NAD(P)H-quinone oxidoreductase subunit 6, chloroplastic (176 aa).

Transmembrane regions (helical) follow at residues 10–30 (FLLV…VLLT), 32–52 (PIYS…LYIL), 61–81 (AQLL…VMFM), 92–112 (LWTV…GLLI), and 152–172 (FFLP…GAIT).

The protein belongs to the complex I subunit 6 family. In terms of assembly, NDH is composed of at least 16 different subunits, 5 of which are encoded in the nucleus.

Its subcellular location is the plastid. The protein resides in the chloroplast thylakoid membrane. The enzyme catalyses a plastoquinone + NADH + (n+1) H(+)(in) = a plastoquinol + NAD(+) + n H(+)(out). It catalyses the reaction a plastoquinone + NADPH + (n+1) H(+)(in) = a plastoquinol + NADP(+) + n H(+)(out). NDH shuttles electrons from NAD(P)H:plastoquinone, via FMN and iron-sulfur (Fe-S) centers, to quinones in the photosynthetic chain and possibly in a chloroplast respiratory chain. The immediate electron acceptor for the enzyme in this species is believed to be plastoquinone. Couples the redox reaction to proton translocation, and thus conserves the redox energy in a proton gradient. The sequence is that of NAD(P)H-quinone oxidoreductase subunit 6, chloroplastic (ndhG) from Morus indica (Mulberry).